The following is a 205-amino-acid chain: RPW8-like protein 2 (205 aa).

Positions 1–153 constitute an RPW8 domain; the sequence is MPLTEIIAGA…IMGQPIDCII (153 aa). A helical membrane pass occupies residues 7-23; the sequence is IAGAALGLALQILHEAI. Coiled-coil stretches lie at residues 70 to 92 and 125 to 147; these read EDLK…LKRR and ADIK…IMGQ.

It belongs to the plant RPW8 protein family.

The protein resides in the membrane. Probable disease resistance (R) protein. This Arabidopsis thaliana (Mouse-ear cress) protein is RPW8-like protein 2.